The chain runs to 483 residues: (R)-mandelonitrile beta-glucosyltransferase (483 aa).

His22 functions as the Proton acceptor in the catalytic mechanism. Residue His22 participates in an anthocyanidin binding. The active-site Charge relay is the Asp124. Positions 146, 363, 378, 381, 382, 383, and 386 each coordinate UDP-alpha-D-glucose. Ala401 contacts an anthocyanidin. UDP-alpha-D-glucose is bound by residues Glu402 and Gln403.

Belongs to the UDP-glycosyltransferase family.

The enzyme catalyses (R)-mandelonitrile + UDP-alpha-D-glucose = (R)-prunasin + UDP + H(+). Involved in the biosynthesis of the cyanogenic glycoside (R)-prunasin, a precursor of (R)-amygdalin, which at high concentrations is associated with intense bitterness in kernels of almond. Stereo-selectively glucosylates (R)-mandelonitrile to produce (R)-prunasin. This chain is (R)-mandelonitrile beta-glucosyltransferase, found in Prunus dulcis (Almond).